The chain runs to 280 residues: Hydroxyethylthiazole kinase (280 aa).

Met50 lines the substrate pocket. The ATP site is built by Lys125 and Thr178. Gly205 contributes to the substrate binding site.

Belongs to the Thz kinase family. It depends on Mg(2+) as a cofactor.

The enzyme catalyses 5-(2-hydroxyethyl)-4-methylthiazole + ATP = 4-methyl-5-(2-phosphooxyethyl)-thiazole + ADP + H(+). It participates in cofactor biosynthesis; thiamine diphosphate biosynthesis; 4-methyl-5-(2-phosphoethyl)-thiazole from 5-(2-hydroxyethyl)-4-methylthiazole: step 1/1. Its function is as follows. Catalyzes the phosphorylation of the hydroxyl group of 4-methyl-5-beta-hydroxyethylthiazole (THZ). The polypeptide is Hydroxyethylthiazole kinase (Lacticaseibacillus casei (strain BL23) (Lactobacillus casei)).